The primary structure comprises 364 residues: Histidinol-phosphate aminotransferase (364 aa).

An N6-(pyridoxal phosphate)lysine modification is found at K226.

The protein belongs to the class-II pyridoxal-phosphate-dependent aminotransferase family. Histidinol-phosphate aminotransferase subfamily. Homodimer. Requires pyridoxal 5'-phosphate as cofactor.

The enzyme catalyses L-histidinol phosphate + 2-oxoglutarate = 3-(imidazol-4-yl)-2-oxopropyl phosphate + L-glutamate. Its pathway is amino-acid biosynthesis; L-histidine biosynthesis; L-histidine from 5-phospho-alpha-D-ribose 1-diphosphate: step 7/9. The protein is Histidinol-phosphate aminotransferase of Campylobacter jejuni (strain RM1221).